Reading from the N-terminus, the 103-residue chain is N(4)-acetylcytidine amidohydrolase (103 aa).

Positions 6 to 101 (ITFFQRFQDD…QTQFYVIEFK (96 aa)) constitute an ASCH domain. K21 serves as the catalytic Proton acceptor. T24 (nucleophile) is an active-site residue. The Proton donor role is filled by E74.

The protein belongs to the N(4)-acetylcytidine amidohydrolase family.

The catalysed reaction is N(4)-acetylcytidine + H2O = cytidine + acetate + H(+). It carries out the reaction N(4)-acetyl-2'-deoxycytidine + H2O = 2'-deoxycytidine + acetate + H(+). The enzyme catalyses N(4)-acetylcytosine + H2O = cytosine + acetate + H(+). In terms of biological role, catalyzes the hydrolysis of N(4)-acetylcytidine (ac4C). This chain is N(4)-acetylcytidine amidohydrolase (yqfB), found in Escherichia fergusonii (strain ATCC 35469 / DSM 13698 / CCUG 18766 / IAM 14443 / JCM 21226 / LMG 7866 / NBRC 102419 / NCTC 12128 / CDC 0568-73).